A 350-amino-acid chain; its full sequence is Ribosomal RNA large subunit methyltransferase Cfr (350 aa).

Catalysis depends on E92, which acts as the Proton acceptor. The Radical SAM core domain occupies 99 to 333 (EAGWESFCIS…VTIRSQFGRE (235 aa)). C106 and C338 are joined by a disulfide. [4Fe-4S] cluster is bound by residues C113, C117, and C120. S-adenosyl-L-methionine is bound by residues 159–160 (GE), S190, 213–215 (SLH), and N293. The S-methylcysteine intermediate role is filled by C338.

This sequence belongs to the radical SAM superfamily. RlmN family. Cfr subfamily. The cofactor is [4Fe-4S] cluster.

Its subcellular location is the cytoplasm. It carries out the reaction adenosine(2503) in 23S rRNA + 2 reduced [2Fe-2S]-[ferredoxin] + 2 S-adenosyl-L-methionine = 8-methyladenosine(2503) in 23S rRNA + 5'-deoxyadenosine + L-methionine + 2 oxidized [2Fe-2S]-[ferredoxin] + S-adenosyl-L-homocysteine. In terms of biological role, specifically methylates position 8 of adenine 2503 in 23S rRNA. Confers resistance to some classes of antibiotics. This Shouchella clausii (strain KSM-K16) (Alkalihalobacillus clausii) protein is Ribosomal RNA large subunit methyltransferase Cfr.